The primary structure comprises 307 residues: uncharacterized protein (307 aa).

The tract at residues 254-278 is disordered; it reads HSRHHRRHHRRHHHHHHQNSSHSDE. Basic residues predominate over residues 255 to 272; the sequence is SRHHRRHHRRHHHHHHQN.

To yeast YOR062c.

This is an uncharacterized protein from Saccharomyces cerevisiae (strain ATCC 204508 / S288c) (Baker's yeast).